The sequence spans 417 residues: Serine hydroxymethyltransferase (417 aa).

(6S)-5,6,7,8-tetrahydrofolate contacts are provided by residues Leu-121 and Gly-125 to Leu-127. Lys-229 carries the N6-(pyridoxal phosphate)lysine modification. Ser-355–Phe-357 lines the (6S)-5,6,7,8-tetrahydrofolate pocket.

It belongs to the SHMT family. Homodimer. Pyridoxal 5'-phosphate is required as a cofactor.

The protein resides in the cytoplasm. It catalyses the reaction (6R)-5,10-methylene-5,6,7,8-tetrahydrofolate + glycine + H2O = (6S)-5,6,7,8-tetrahydrofolate + L-serine. It functions in the pathway one-carbon metabolism; tetrahydrofolate interconversion. Its pathway is amino-acid biosynthesis; glycine biosynthesis; glycine from L-serine: step 1/1. Catalyzes the reversible interconversion of serine and glycine with tetrahydrofolate (THF) serving as the one-carbon carrier. This reaction serves as the major source of one-carbon groups required for the biosynthesis of purines, thymidylate, methionine, and other important biomolecules. Also exhibits THF-independent aldolase activity toward beta-hydroxyamino acids, producing glycine and aldehydes, via a retro-aldol mechanism. In Xanthomonas euvesicatoria pv. vesicatoria (strain 85-10) (Xanthomonas campestris pv. vesicatoria), this protein is Serine hydroxymethyltransferase.